We begin with the raw amino-acid sequence, 351 residues long: Adenine deaminase (351 aa).

Zn(2+)-binding residues include histidine 19, histidine 21, and histidine 208. Catalysis depends on glutamate 211, which acts as the Proton donor. Residue aspartate 288 coordinates Zn(2+). Aspartate 289 serves as a coordination point for substrate.

Belongs to the metallo-dependent hydrolases superfamily. Adenosine and AMP deaminases family. Adenine deaminase type 2 subfamily. It depends on Zn(2+) as a cofactor.

It is found in the cytoplasm. The protein localises to the nucleus. It carries out the reaction adenine + H2O + H(+) = hypoxanthine + NH4(+). Its function is as follows. Catalyzes the hydrolytic deamination of adenine to hypoxanthine. Plays an important role in the purine salvage pathway and in nitrogen catabolism. In Aspergillus oryzae (strain ATCC 42149 / RIB 40) (Yellow koji mold), this protein is Adenine deaminase (aah1).